A 485-amino-acid polypeptide reads, in one-letter code: Sulfate adenylyltransferase subunit 1 (485 aa).

One can recognise a tr-type G domain in the interval 17–232 (KDLLRLLTAG…LETVHIDNDH (216 aa)). Residues 26–33 (GSVDDGKS) are G1. 26 to 33 (GSVDDGKS) contributes to the GTP binding site. The tract at residues 84–88 (GITID) is G2. The interval 105-108 (DTPG) is G3. Residues 105–109 (DTPGH) and 160–163 (NKMD) each bind GTP. Residues 160 to 163 (NKMD) are G4. The tract at residues 197-199 (SAL) is G5.

Belongs to the TRAFAC class translation factor GTPase superfamily. Classic translation factor GTPase family. CysN/NodQ subfamily. In terms of assembly, heterodimer composed of CysD, the smaller subunit, and CysN.

It catalyses the reaction sulfate + ATP + H(+) = adenosine 5'-phosphosulfate + diphosphate. The protein operates within sulfur metabolism; hydrogen sulfide biosynthesis; sulfite from sulfate: step 1/3. In terms of biological role, with CysD forms the ATP sulfurylase (ATPS) that catalyzes the adenylation of sulfate producing adenosine 5'-phosphosulfate (APS) and diphosphate, the first enzymatic step in sulfur assimilation pathway. APS synthesis involves the formation of a high-energy phosphoric-sulfuric acid anhydride bond driven by GTP hydrolysis by CysN coupled to ATP hydrolysis by CysD. The polypeptide is Sulfate adenylyltransferase subunit 1 (Bacteroides thetaiotaomicron (strain ATCC 29148 / DSM 2079 / JCM 5827 / CCUG 10774 / NCTC 10582 / VPI-5482 / E50)).